The chain runs to 503 residues: Lysine--tRNA ligase (503 aa).

The Mg(2+) site is built by glutamate 414 and glutamate 421.

The protein belongs to the class-II aminoacyl-tRNA synthetase family. Homodimer. Mg(2+) serves as cofactor.

Its subcellular location is the cytoplasm. It catalyses the reaction tRNA(Lys) + L-lysine + ATP = L-lysyl-tRNA(Lys) + AMP + diphosphate. The polypeptide is Lysine--tRNA ligase (Neisseria meningitidis serogroup B (strain ATCC BAA-335 / MC58)).